Consider the following 232-residue polypeptide: Ureidoacrylate amidohydrolase RutB (232 aa).

Residue aspartate 26 is the Proton acceptor of the active site. Lysine 135 is an active-site residue. Cysteine 168 acts as the Nucleophile in catalysis.

Belongs to the isochorismatase family. RutB subfamily.

It catalyses the reaction (Z)-3-ureidoacrylate + H2O + H(+) = (Z)-3-aminoacrylate + NH4(+) + CO2. The enzyme catalyses (Z)-3-ureidoacrylate + H2O = (Z)-3-aminoacrylate + carbamate + H(+). It carries out the reaction (Z)-2-methylureidoacrylate + H2O + H(+) = (Z)-2-methylaminoacrylate + NH4(+) + CO2. Functionally, hydrolyzes ureidoacrylate to form aminoacrylate and carbamate. The carbamate hydrolyzes spontaneously, thereby releasing one of the nitrogen atoms of the pyrimidine ring as ammonia and one of its carbon atoms as CO2. The protein is Ureidoacrylate amidohydrolase RutB of Cronobacter sakazakii (strain ATCC BAA-894) (Enterobacter sakazakii).